Reading from the N-terminus, the 186-residue chain is Ribosome-recycling factor (186 aa).

The protein belongs to the RRF family.

Its subcellular location is the cytoplasm. Responsible for the release of ribosomes from messenger RNA at the termination of protein biosynthesis. May increase the efficiency of translation by recycling ribosomes from one round of translation to another. This chain is Ribosome-recycling factor, found in Brucella melitensis biotype 2 (strain ATCC 23457).